The sequence spans 1182 residues: Exocyst complex component 4 (1182 aa).

Residues 236 to 250 (NKNSNSNNSNNTFKS) are compositionally biased toward low complexity. Disordered stretches follow at residues 236-262 (NKNS…PFKP), 376-427 (IPKM…SSNI), 525-545 (EETE…PKPT), and 921-968 (QQQQ…GSNN). Gly residues predominate over residues 392 to 409 (GSNGGGNNSMNGSGGING). Over residues 410 to 426 (NGSTASSSSPTSSTSSN) the composition is skewed to low complexity. Residues 921 to 932 (QQQQQQQQQQQQ) show a composition bias toward low complexity. Over residues 933 to 968 (VDSIKTPSKLNSGINSGGNSTASNKENNSTTTGSNN) the composition is skewed to polar residues.

The protein belongs to the SEC8 family. The exocyst complex is composed of sec3/exoc1, sec5/exoc2, sec6/exoc3, sec8/exoc4, sec10/exoc5, sec15/exoc6, exo70/exoc7 and exo84/exoc8.

The protein localises to the midbody. The protein resides in the midbody ring. It is found in the cell projection. Its subcellular location is the cytoplasm. It localises to the cytoskeleton. The protein localises to the microtubule organizing center. The protein resides in the centrosome. Component of the exocyst complex involved in the docking of exocytic vesicles with fusion sites on the plasma membrane. The sequence is that of Exocyst complex component 4 (exoc4) from Dictyostelium discoideum (Social amoeba).